The chain runs to 454 residues: Ribosomal protein uS12 methylthiotransferase RimO (454 aa).

An MTTase N-terminal domain is found at 14-125 (SKVAFSHVGC…IAKVLDRVEQ (112 aa)). [4Fe-4S] cluster contacts are provided by cysteine 23, cysteine 59, cysteine 88, cysteine 163, cysteine 167, and cysteine 170. The region spanning 149–378 (DKNKFVAYLR…ISVQQNISKD (230 aa)) is the Radical SAM core domain. The TRAM domain maps to 381 to 452 (QTYVGSKMKI…EYDLYGEIIK (72 aa)).

It belongs to the methylthiotransferase family. RimO subfamily. It depends on [4Fe-4S] cluster as a cofactor.

It localises to the cytoplasm. The catalysed reaction is L-aspartate(89)-[ribosomal protein uS12]-hydrogen + (sulfur carrier)-SH + AH2 + 2 S-adenosyl-L-methionine = 3-methylsulfanyl-L-aspartate(89)-[ribosomal protein uS12]-hydrogen + (sulfur carrier)-H + 5'-deoxyadenosine + L-methionine + A + S-adenosyl-L-homocysteine + 2 H(+). In terms of biological role, catalyzes the methylthiolation of an aspartic acid residue of ribosomal protein uS12. The chain is Ribosomal protein uS12 methylthiotransferase RimO from Prochlorococcus marinus (strain AS9601).